Consider the following 417-residue polypeptide: D-galactonate dehydratase family member Dd703_0947 (417 aa).

H127 is a binding site for substrate. Y158 (proton donor/acceptor) is an active-site residue. D223 contacts Mg(2+). The Proton donor/acceptor role is filled by H225. Mg(2+) contacts are provided by E249 and E275. Residues E275, R296, H325, D329, and E352 each contribute to the substrate site.

The protein belongs to the mandelate racemase/muconate lactonizing enzyme family. GalD subfamily. It depends on Mg(2+) as a cofactor.

It carries out the reaction D-mannonate = 2-dehydro-3-deoxy-D-gluconate + H2O. The catalysed reaction is D-gluconate = 2-dehydro-3-deoxy-D-gluconate + H2O. In terms of biological role, has low dehydratase activity with D-mannonate and D-gluconate, suggesting that these are not physiological substrates and that it has no significant role in the in vivo degradation of these compounds. Has no detectable activity with a panel of 70 other acid sugars (in vitro). This Musicola paradisiaca (strain Ech703) (Dickeya paradisiaca) protein is D-galactonate dehydratase family member Dd703_0947.